A 98-amino-acid polypeptide reads, in one-letter code: NADH-ubiquinone oxidoreductase chain 4L (98 aa).

Helical transmembrane passes span 1–21 (MSLI…GLLM), 29–49 (ALLC…LTIL), and 61–81 (IILL…LVMV).

This sequence belongs to the complex I subunit 4L family. Core subunit of respiratory chain NADH dehydrogenase (Complex I) which is composed of 45 different subunits.

It localises to the mitochondrion inner membrane. It carries out the reaction a ubiquinone + NADH + 5 H(+)(in) = a ubiquinol + NAD(+) + 4 H(+)(out). In terms of biological role, core subunit of the mitochondrial membrane respiratory chain NADH dehydrogenase (Complex I) which catalyzes electron transfer from NADH through the respiratory chain, using ubiquinone as an electron acceptor. Part of the enzyme membrane arm which is embedded in the lipid bilayer and involved in proton translocation. This Phocoena phocoena (Harbor porpoise) protein is NADH-ubiquinone oxidoreductase chain 4L (MT-ND4L).